The sequence spans 361 residues: MSSVVIYCRSGFENDAAAEITFHAAEQGFAGYVKAKPNTGYVIYECFDAQHGDEIIKKVDFKNMVFARQWFAGTLIENMPVEDRVGAVVEAAKDFTLCSELRVETPDTNEGKELLTFCKKISTPLKKALEKRNIVLREPKANRPVMHVLFLTNNTAYVGYSYSFNNSPFFMGILRLRMPSDAPSRSTLKLDEAFNVFIPEQQRESRVAAGMRSVDLGACPGGWTYQLVRRGMFVSAIDNGPMNDDLMQTGQVKHFRADGFKYRPEKRNITWLVCDMVEKPTKVTSLMIDWAVNAYAKELIFNLKLPMKKRFDSVYECLSMIRAELEKYGISYELQAKHLYHDREEVTVHLNVTKVPQSLYS.

Residues Ser-186, 219-222 (CPGG), Asp-238, Asp-258, and Asp-275 contribute to the S-adenosyl-L-methionine site. The active-site Proton acceptor is Lys-304.

Belongs to the class I-like SAM-binding methyltransferase superfamily. RNA methyltransferase RlmE family. RlmM subfamily. Monomer.

It is found in the cytoplasm. The catalysed reaction is cytidine(2498) in 23S rRNA + S-adenosyl-L-methionine = 2'-O-methylcytidine(2498) in 23S rRNA + S-adenosyl-L-homocysteine + H(+). Functionally, catalyzes the 2'-O-methylation at nucleotide C2498 in 23S rRNA. In Pseudoalteromonas translucida (strain TAC 125), this protein is Ribosomal RNA large subunit methyltransferase M.